The chain runs to 312 residues: MARLSEPSPYVEFDRAQWRALRMSTPLKLTEDELVRLRGIGEKIDLLEVEEVYLPLARLIHLQVAARQALFATTADFLGEPQQNPDRPVPFVIGVAGSVAVGKSTTARVLQALLARWEHHPRVDLVTTDGFLYSNSELSRRNLMHRKGFPESYDRRGLMRFVTTVKSGSDVACAPVYSHLLYDIVPGEKQIIEHPDILILEGLNVLQTGPALMVSDLFDFSVYVDARIEDIENWYISRFLKMREGAFADPASHFHHYSTLTDEQAVFAARDIWHSINRPNLIENILPTRPRATLVLRKDSDHSINRLRLRKL.

97–104 is a binding site for ATP; it reads GSVAVGKS.

This sequence belongs to the prokaryotic pantothenate kinase family.

It is found in the cytoplasm. The enzyme catalyses (R)-pantothenate + ATP = (R)-4'-phosphopantothenate + ADP + H(+). It participates in cofactor biosynthesis; coenzyme A biosynthesis; CoA from (R)-pantothenate: step 1/5. This chain is Pantothenate kinase, found in Mycolicibacterium gilvum (strain PYR-GCK) (Mycobacterium gilvum (strain PYR-GCK)).